Here is an 83-residue protein sequence, read N- to C-terminus: Translation initiation factor IF-1 (83 aa).

One can recognise an S1-like domain in the interval 1–72 (MAKEELIEMQ…SKGRITFRHL (72 aa)).

This sequence belongs to the IF-1 family. In terms of assembly, component of the 30S ribosomal translation pre-initiation complex which assembles on the 30S ribosome in the order IF-2 and IF-3, IF-1 and N-formylmethionyl-tRNA(fMet); mRNA recruitment can occur at any time during PIC assembly.

It is found in the cytoplasm. One of the essential components for the initiation of protein synthesis. Stabilizes the binding of IF-2 and IF-3 on the 30S subunit to which N-formylmethionyl-tRNA(fMet) subsequently binds. Helps modulate mRNA selection, yielding the 30S pre-initiation complex (PIC). Upon addition of the 50S ribosomal subunit IF-1, IF-2 and IF-3 are released leaving the mature 70S translation initiation complex. This is Translation initiation factor IF-1 from Verminephrobacter eiseniae (strain EF01-2).